Reading from the N-terminus, the 291-residue chain is Protease HtpX (291 aa).

Helical transmembrane passes span 4–24 (IILF…ILSF) and 32–52 (ISGL…ISLL). Histidine 139 contacts Zn(2+). Glutamate 140 is an active-site residue. Histidine 143 lines the Zn(2+) pocket. 2 helical membrane-spanning segments follow: residues 158-178 (IVNT…SSIL) and 192-212 (WVYI…ASII). A Zn(2+)-binding site is contributed by glutamate 221.

The protein belongs to the peptidase M48B family. It depends on Zn(2+) as a cofactor.

Its subcellular location is the cell membrane. This Buchnera aphidicola subsp. Baizongia pistaciae (strain Bp) protein is Protease HtpX.